A 312-amino-acid polypeptide reads, in one-letter code: MELIILVGIATALLVVIITLYLLQKKNAAPETKPAAALQRGVPQRVQEGVPRRAQIARNQRNRLRQNAPAAPAGQVAPAAGPPAAPGDSDHENEGQVDDDDARVPQGAVLDEKMGAKKRAKMEAKEQKRLQREQELHDREQRKVKEAKEEAERKHQEDLEAEVERKRVEAERLAKEERERKEHEEYLKMKAAFSVEEEGFEEGDADEQDSLLADFIQYIRDNKVVVLEDLAVAFKLKTQQVIDRIQELQADGTLTGVIDDRGKFIYVSEEELSAVAKFIKQRGRVSIAELAESSNNLINLTPISAGGEEASS.

At 1–2 (ME) the chain is on the lumenal side. The chain crosses the membrane as a helical span at residues 3–23 (LIILVGIATALLVVIITLYLL). The Cytoplasmic segment spans residues 24–312 (QKKNAAPETK…ISAGGEEASS (289 aa)). The span at 59 to 79 (NQRNRLRQNAPAAPAGQVAPA) shows a compositional bias: low complexity. Positions 59 to 162 (NQRNRLRQNA…RKHQEDLEAE (104 aa)) are disordered. The segment covering 110–162 (LDEKMGAKKRAKMEAKEQKRLQREQELHDREQRKVKEAKEEAERKHQEDLEAE) has biased composition (basic and acidic residues).

This sequence belongs to the DDRGK1 family. In terms of assembly, interacts with Atg9; the interaction is transient.

Its subcellular location is the endoplasmic reticulum membrane. Its function is as follows. Substrate adapter for ufmylation, the covalent attachment of the ubiquitin-like modifier UFM1 to substrate proteins. Required for ufmylation of Atg9; protects the nervous system during aging, possibly by stabilizing Atg9 and supporting its function. This is DDRGK domain-containing protein 1 from Drosophila yakuba (Fruit fly).